A 116-amino-acid chain; its full sequence is Protein Wnt-5(I) (116 aa).

A lipid anchor (O-palmitoleoyl serine; by PORCN) is attached at Ser1. Asn69 carries N-linked (GlcNAc...) asparagine glycosylation. A disulfide bond links Cys82 and Cys97.

Belongs to the Wnt family. Palmitoleoylation is required for efficient binding to frizzled receptors. Depalmitoleoylation leads to Wnt signaling pathway inhibition.

It localises to the secreted. The protein resides in the extracellular space. The protein localises to the extracellular matrix. Its function is as follows. Ligand for members of the frizzled family of seven transmembrane receptors. Probable developmental protein. May be a signaling molecule which affects the development of discrete regions of tissues. Is likely to signal over only few cell diameters. This chain is Protein Wnt-5(I) (WNT-5(I)), found in Eptatretus stoutii (Pacific hagfish).